Consider the following 373-residue polypeptide: Forkhead box protein E1 (373 aa).

The segment at 19 to 51 (KEERGETAAGAGVPGEATGRGAGGRRRKRPLQR) is disordered. Over residues 41–50 (GGRRRKRPLQ) the composition is skewed to basic residues. A DNA-binding region (fork-head) is located at residues 53-147 (KPPYSYIALI…ESGSFLRRRK (95 aa)).

Post-translationally, phosphorylated. In terms of tissue distribution, detected in adult brain, placenta, lung, liver, skeletal muscle, kidney, pancreas, heart, colon, small intestine testis and thymus. Expression was strongest in heart and pancreas.

It is found in the nucleus. In terms of biological role, transcription factor that binds consensus sites on a variety of gene promoters and activate their transcription. Involved in proper palate formation, most probably through the expression of MSX1 and TGFB3 genes which are direct targets of this transcription factor. Also implicated in thyroid gland morphogenesis. May indirectly play a role in cell growth and migration through the regulation of WNT5A expression. This chain is Forkhead box protein E1 (FOXE1), found in Homo sapiens (Human).